A 579-amino-acid polypeptide reads, in one-letter code: uncharacterized protein (579 aa).

11 helical membrane-spanning segments follow: residues 13–35, 39–61, 66–83, 93–110, 130–152, 162–181, 201–223, 238–257, 264–286, 296–315, and 324–346; these read DLIKQYPLAMSFIFISTAFIPWI, SISRDMIVVLLLPIYFSTVLLLN, ANGLAIAYAILITLAFYF, AYWGLLLIHFVLFVTYPL, LAIVLAGIICICAVLVLNSIEYL, IVPKTLLFIMCFFTPVFFLI, LIVNFIFSPVVILYTLIVYLYLA, YIIMPYIALGLCCQGLRLLL, GFYRVFAYLSIAPLVLLWVGIHT, IRVMLVVLASMMTLFILFSM, and LFSLTACLLLFISTILTSPYYLA.

It is found in the cell membrane. This is an uncharacterized protein from Pasteurella multocida (strain Pm70).